Here is a 142-residue protein sequence, read N- to C-terminus: Large ribosomal subunit protein uL11 (142 aa).

The protein belongs to the universal ribosomal protein uL11 family. In terms of assembly, part of the ribosomal stalk of the 50S ribosomal subunit. Interacts with L10 and the large rRNA to form the base of the stalk. L10 forms an elongated spine to which L12 dimers bind in a sequential fashion forming a multimeric L10(L12)X complex. In terms of processing, one or more lysine residues are methylated.

In terms of biological role, forms part of the ribosomal stalk which helps the ribosome interact with GTP-bound translation factors. The polypeptide is Large ribosomal subunit protein uL11 (Shewanella halifaxensis (strain HAW-EB4)).